The primary structure comprises 255 residues: MSNARQRELIREFLAVTSATSAAAETYLERNHWSLDHALDDFYTQSGGGGRAEQYSAELVATFERYAAGGAMDTEALVRYVGDLGFQLEDVATLCLARLLKVEELTADISRFQFLSTWHGLGCSSLPDMRAAVDALELRLRTDAAYFRALYAYTFGLGLDAGGRRLSVETAIAYWSLFFLDHTYAVTVPAPRLRSWFEFLRAGDHSVSRDTWDMFPRFAQRFPDDTELLEHYNELASWPLVIDEYYEWVKGRNQL.

The UBA-like domain occupies 6–43; the sequence is QRELIREFLAVTSATSAAAETYLERNHWSLDHALDDFY. One can recognise a DCUN1 domain in the interval 54 to 250; that stretch reads QYSAELVATF…VIDEYYEWVK (197 aa).

Functionally, may contribute to neddylation of cullin components of SCF-type E3 ubiquitin ligase complexes. Neddylation of cullins play an essential role in the regulation of SCF-type complexes activity. The chain is Defective in cullin neddylation protein 1 (DCN1) from Eremothecium gossypii (strain ATCC 10895 / CBS 109.51 / FGSC 9923 / NRRL Y-1056) (Yeast).